Here is a 237-residue protein sequence, read N- to C-terminus: Large ribosomal subunit protein uL1 (237 aa).

The protein belongs to the universal ribosomal protein uL1 family. Part of the 50S ribosomal subunit.

Functionally, binds directly to 23S rRNA. The L1 stalk is quite mobile in the ribosome, and is involved in E site tRNA release. Its function is as follows. Protein L1 is also a translational repressor protein, it controls the translation of the L11 operon by binding to its mRNA. The polypeptide is Large ribosomal subunit protein uL1 (Solibacter usitatus (strain Ellin6076)).